Here is a 139-residue protein sequence, read N- to C-terminus: MAMTVHCDIVSAEGEIFSGLVEMVVAHGNLGDLGIAPGHAPLITNLKPGPITLTKQGGDREVFYISGGFLEVQPNMVKVLADTVQRAADLDEAQAQEALKAAENALNAKSSDFDYGAAAARLAEAAAQLRTVQQLRKGK.

The protein belongs to the ATPase epsilon chain family. As to quaternary structure, F-type ATPases have 2 components, CF(1) - the catalytic core - and CF(0) - the membrane proton channel. CF(1) has five subunits: alpha(3), beta(3), gamma(1), delta(1), epsilon(1). CF(0) has three main subunits: a, b and c.

It localises to the cell inner membrane. Functionally, produces ATP from ADP in the presence of a proton gradient across the membrane. This is ATP synthase epsilon chain from Pseudomonas entomophila (strain L48).